We begin with the raw amino-acid sequence, 1235 residues long: ATP-dependent helicase/nuclease subunit A (1235 aa).

Residues 10 to 482 enclose the UvrD-like helicase ATP-binding domain; sequence SIWTDDQWSA…IDLNQNFRSR (473 aa). 31 to 38 is an ATP binding site; that stretch reads AAAGSGKT. In terms of domain architecture, UvrD-like helicase C-terminal spans 509-799; that stretch reads QAALKLGASY…RLMTIHSSKG (291 aa).

It belongs to the helicase family. AddA subfamily. As to quaternary structure, heterodimer of AddA and AddB/RexB. It depends on Mg(2+) as a cofactor.

The catalysed reaction is Couples ATP hydrolysis with the unwinding of duplex DNA by translocating in the 3'-5' direction.. The enzyme catalyses ATP + H2O = ADP + phosphate + H(+). The heterodimer acts as both an ATP-dependent DNA helicase and an ATP-dependent, dual-direction single-stranded exonuclease. Recognizes the chi site generating a DNA molecule suitable for the initiation of homologous recombination. The AddA nuclease domain is required for chi fragment generation; this subunit has the helicase and 3' -&gt; 5' nuclease activities. This Bacillus velezensis (strain DSM 23117 / BGSC 10A6 / LMG 26770 / FZB42) (Bacillus amyloliquefaciens subsp. plantarum) protein is ATP-dependent helicase/nuclease subunit A.